Reading from the N-terminus, the 433-residue chain is GTPase Der (433 aa).

EngA-type G domains lie at 5–167 (KKVL…GRVN) and 174–349 (IKVG…DQLE). Residues 11-18 (GRPNVGKS), 58-62 (DTGGF), 119-122 (NKVD), 180-187 (GKPNSGKS), 227-231 (DTAGI), and 292-295 (SKWD) each bind GTP. One can recognise a KH-like domain in the interval 349–429 (ELKTNTPDLN…PILVELREKI (81 aa)).

Belongs to the TRAFAC class TrmE-Era-EngA-EngB-Septin-like GTPase superfamily. EngA (Der) GTPase family. As to quaternary structure, associates with the 50S ribosomal subunit.

Its function is as follows. GTPase that plays an essential role in the late steps of ribosome biogenesis. The polypeptide is GTPase Der (Borrelia garinii subsp. bavariensis (strain ATCC BAA-2496 / DSM 23469 / PBi) (Borreliella bavariensis)).